The sequence spans 226 residues: Ribose-5-phosphate isomerase A (226 aa).

Residues 33–36 (TGST), 86–89 (DGAD), and 99–102 (KGGG) each bind substrate. Glu108 serves as the catalytic Proton acceptor. Position 126 (Lys126) interacts with substrate.

The protein belongs to the ribose 5-phosphate isomerase family. As to quaternary structure, homodimer.

It catalyses the reaction aldehydo-D-ribose 5-phosphate = D-ribulose 5-phosphate. It participates in carbohydrate degradation; pentose phosphate pathway; D-ribose 5-phosphate from D-ribulose 5-phosphate (non-oxidative stage): step 1/1. Its function is as follows. Catalyzes the reversible conversion of ribose-5-phosphate to ribulose 5-phosphate. The sequence is that of Ribose-5-phosphate isomerase A from Bordetella parapertussis (strain 12822 / ATCC BAA-587 / NCTC 13253).